The following is a 623-amino-acid chain: UvrABC system protein C (623 aa).

Residues 28 to 105 form the GIY-YIG domain; sequence GAPGVYRMLD…IKQLKPKYNV (78 aa). Residues 215–250 form the UVR domain; it reads TRVQEELAEQMMAASEAMEFERAAALRDRIRALTTV.

Belongs to the UvrC family. As to quaternary structure, interacts with UvrB in an incision complex.

Its subcellular location is the cytoplasm. The UvrABC repair system catalyzes the recognition and processing of DNA lesions. UvrC both incises the 5' and 3' sides of the lesion. The N-terminal half is responsible for the 3' incision and the C-terminal half is responsible for the 5' incision. The sequence is that of UvrABC system protein C from Ruegeria pomeroyi (strain ATCC 700808 / DSM 15171 / DSS-3) (Silicibacter pomeroyi).